Reading from the N-terminus, the 195-residue chain is Urease accessory protein UreG (195 aa).

Position 9 to 16 (9 to 16 (GPVGSGKT)) interacts with GTP.

The protein belongs to the SIMIBI class G3E GTPase family. UreG subfamily. As to quaternary structure, homodimer. UreD, UreF and UreG form a complex that acts as a GTP-hydrolysis-dependent molecular chaperone, activating the urease apoprotein by helping to assemble the nickel containing metallocenter of UreC. The UreE protein probably delivers the nickel.

The protein resides in the cytoplasm. Facilitates the functional incorporation of the urease nickel metallocenter. This process requires GTP hydrolysis, probably effectuated by UreG. This is Urease accessory protein UreG from Aliarcobacter butzleri (strain RM4018) (Arcobacter butzleri).